A 294-amino-acid chain; its full sequence is MQITEKYLPFGNWQTYCRIVGEATDRAPLLLLHGGPGSSHNYFEVLDQVAEKSGRQVIMYDQLGCGNSSIPDDQAETAYTAQTWVKELENVREQLGLDQIHLLGQSWGGMLALIYLCDYQPKGVKSLILSSTLASAKLWSQELHRLIKYLPKGEQAAIKEAETTGNYDSPAYQAANAHFMDQHAINVTPDLPEPVLRKKKGGNLAYLTGWGPNEYTPIGNLHGYEYTDRLKDLDLPALITSGTDDLCTPLVAKSMYDHLPNARWELFAGCGHMPFVQENAKYQELLSDWLISQD.

In terms of domain architecture, AB hydrolase-1 spans 28 to 278; sequence PLLLLHGGPG…GCGHMPFVQE (251 aa). S106 functions as the Nucleophile in the catalytic mechanism. D245 is a catalytic residue. H272 serves as the catalytic Proton donor.

The protein belongs to the peptidase S33 family. As to quaternary structure, homotrimer.

The protein localises to the cell envelope. It carries out the reaction Release of N-terminal proline from a peptide.. With respect to regulation, inhibited by 3,4-DCI, but no significant effect on enzyme activity by pepstatin A, E-64, 1,10-phenanthroline or EDTA. Functionally, releases the N-terminal proline from various substrates. Cleaves Pro-betaNA (L-prolyl-beta-naphthylamide) effectively. The sequence is that of Proline iminopeptidase (pip) from Lactobacillus delbrueckii subsp. lactis.